A 365-amino-acid chain; its full sequence is Cobalt-precorrin-5B C(1)-methyltransferase (365 aa).

It belongs to the CbiD family.

The catalysed reaction is Co-precorrin-5B + S-adenosyl-L-methionine = Co-precorrin-6A + S-adenosyl-L-homocysteine. It participates in cofactor biosynthesis; adenosylcobalamin biosynthesis; cob(II)yrinate a,c-diamide from sirohydrochlorin (anaerobic route): step 6/10. Its function is as follows. Catalyzes the methylation of C-1 in cobalt-precorrin-5B to form cobalt-precorrin-6A. The chain is Cobalt-precorrin-5B C(1)-methyltransferase from Geobacillus sp. (strain WCH70).